The primary structure comprises 379 residues: UDP-N-acetylglucosamine--N-acetylmuramyl-(pentapeptide) pyrophosphoryl-undecaprenol N-acetylglucosamine transferase (379 aa).

Residues 10–12 (TAG), Asn-124, Arg-161, Ser-195, and Gln-291 contribute to the UDP-N-acetyl-alpha-D-glucosamine site.

This sequence belongs to the glycosyltransferase 28 family. MurG subfamily.

The protein localises to the cell membrane. It carries out the reaction di-trans,octa-cis-undecaprenyl diphospho-N-acetyl-alpha-D-muramoyl-L-alanyl-D-glutamyl-meso-2,6-diaminopimeloyl-D-alanyl-D-alanine + UDP-N-acetyl-alpha-D-glucosamine = di-trans,octa-cis-undecaprenyl diphospho-[N-acetyl-alpha-D-glucosaminyl-(1-&gt;4)]-N-acetyl-alpha-D-muramoyl-L-alanyl-D-glutamyl-meso-2,6-diaminopimeloyl-D-alanyl-D-alanine + UDP + H(+). It functions in the pathway cell wall biogenesis; peptidoglycan biosynthesis. Its function is as follows. Cell wall formation. Catalyzes the transfer of a GlcNAc subunit on undecaprenyl-pyrophosphoryl-MurNAc-pentapeptide (lipid intermediate I) to form undecaprenyl-pyrophosphoryl-MurNAc-(pentapeptide)GlcNAc (lipid intermediate II). This Thermobifida fusca (strain YX) protein is UDP-N-acetylglucosamine--N-acetylmuramyl-(pentapeptide) pyrophosphoryl-undecaprenol N-acetylglucosamine transferase.